The chain runs to 300 residues: N-acetylmuramic acid 6-phosphate etherase (300 aa).

The SIS domain maps to 55 to 217 (IAERLRAGGR…STGAMIRLGK (163 aa)). The active-site Proton donor is the Glu-83. Glu-114 is an active-site residue.

It belongs to the GCKR-like family. MurNAc-6-P etherase subfamily. As to quaternary structure, homodimer.

The catalysed reaction is N-acetyl-D-muramate 6-phosphate + H2O = N-acetyl-D-glucosamine 6-phosphate + (R)-lactate. It participates in amino-sugar metabolism; N-acetylmuramate degradation. Its function is as follows. Specifically catalyzes the cleavage of the D-lactyl ether substituent of MurNAc 6-phosphate, producing GlcNAc 6-phosphate and D-lactate. In Symbiobacterium thermophilum (strain DSM 24528 / JCM 14929 / IAM 14863 / T), this protein is N-acetylmuramic acid 6-phosphate etherase.